The sequence spans 336 residues: Nuclear envelope-associated protein 1 (336 aa).

Residues 125 to 261 (CSMLKQQLDD…RRTDQDLKKK (137 aa)) are a coiled coil. The Bipartite nuclear localization signal signature appears at 240–261 (KTKELESQLEKQRRTDQDLKKK). The helical transmembrane segment at 313–330 (FWDNSGFKIVVSMSMLML) threads the bilayer.

In terms of assembly, forms heteromers with NEAP2 and NEAP3. Interacts with SUN1; SUN2 and bZIP18.

The protein resides in the nucleus inner membrane. Its subcellular location is the nucleus. It localises to the nucleoplasm. This is Nuclear envelope-associated protein 1 from Arabidopsis thaliana (Mouse-ear cress).